Here is a 542-residue protein sequence, read N- to C-terminus: MTVMEHTKAASIDLTKHGLRNVKEVVRNPSYEMLFAEETRADLEGYEKGVVTELGAVAVDTGIFTGRSPKDKYIVKDATTEEHMWWTTPAVPNDNKPITQEVWNDLKQLVTNQLSGKRVFVIDGYCGANPDTRLSIRVITEVAWQAHFVKNMFIRPTEEELASFEPDFVVMNGAKCTNQKWKEHGLNSENFTVFNLTERMQLIGGTWYGGEMKKGMFAMMNYFLPLKGIASMHCSANMGKEGDVAIFFGLSGTGKTTLSTDPKRALIGDDEHGWDDDGVFNFEGGCYAKTIKLSKEAEPDIYNAIRRNALLENVTVRNDGSINFDDGSKTENTRVSYPIHHIENIVKPVSKGGHANKVIFLSADAFGVLPPVSKLTPEQTKYHFLSGFTAKLAGTERGITEPTPTFSACFGAAFLTLHPTKYAEVLVKRMEEAGAEAYLVNTGWNGSGKRISIQDTRGIIDAILDGSIEEAPTKHVPIFNLEVPTSLPGVDPTILDPRDTYVDPLQWESKAQDLAQRFINNFAKYTDNAEGQSLVAAGPQLD.

Substrate is bound by residues R67, Y208, and K214. Residues K214, H233, and 249–257 (GLSGTGKTT) contribute to the ATP site. Mn(2+) is bound by residues K214 and H233. Residue D270 participates in Mn(2+) binding. ATP contacts are provided by residues E298, R334, 450–451 (RI), and T456. R334 is a binding site for substrate.

The protein belongs to the phosphoenolpyruvate carboxykinase (ATP) family. Monomer. It depends on Mn(2+) as a cofactor.

It is found in the cytoplasm. It carries out the reaction oxaloacetate + ATP = phosphoenolpyruvate + ADP + CO2. Its pathway is carbohydrate biosynthesis; gluconeogenesis. Involved in the gluconeogenesis. Catalyzes the conversion of oxaloacetate (OAA) to phosphoenolpyruvate (PEP) through direct phosphoryl transfer between the nucleoside triphosphate and OAA. This Vibrio vulnificus (strain YJ016) protein is Phosphoenolpyruvate carboxykinase (ATP).